Reading from the N-terminus, the 325-residue chain is Short chain isoprenyl diphosphate synthase (325 aa).

Isopentenyl diphosphate is bound by residues Lys-44, Arg-47, and His-76. Mg(2+)-binding residues include Asp-83 and Asp-87. Arg-92 provides a ligand contact to an all-trans-polyprenyl diphosphate. Position 93 (Arg-93) interacts with isopentenyl diphosphate. An all-trans-polyprenyl diphosphate-binding residues include Lys-173, Thr-174, Gln-211, Lys-228, and Lys-238.

It belongs to the FPP/GGPP synthase family. In terms of assembly, homodimer. It depends on Mg(2+) as a cofactor.

The protein localises to the cytoplasm. The polypeptide is Short chain isoprenyl diphosphate synthase (idsA) (Methanothermobacter thermautotrophicus (strain ATCC 29096 / DSM 1053 / JCM 10044 / NBRC 100330 / Delta H) (Methanobacterium thermoautotrophicum)).